Consider the following 217-residue polypeptide: UPF0323 lipoprotein HPP12_0232 (217 aa).

A signal peptide spans 1–27 (MKKPYRKISDYAIVGGLSALVMVSIVG). Residue Cys28 is the site of N-palmitoyl cysteine attachment. A lipid anchor (S-diacylglycerol cysteine) is attached at Cys28. Residues 160-171 (QRTYKSPQAYQR) show a composition bias toward polar residues. The disordered stretch occupies residues 160–217 (QRTYKSPQAYQRSQNSFSKSAPSASSMGTASKGQSGFFGSSRPTSSPAISSGTRGFNS). Low complexity predominate over residues 172-185 (SQNSFSKSAPSASS). Positions 186-197 (MGTASKGQSGFF) are enriched in polar residues. Positions 199–210 (SSRPTSSPAISS) are enriched in low complexity.

Belongs to the UPF0323 family.

Its subcellular location is the cell membrane. This chain is UPF0323 lipoprotein HPP12_0232, found in Helicobacter pylori (strain P12).